Here is a 140-residue protein sequence, read N- to C-terminus: Small ribosomal subunit protein uS19 (140 aa).

This sequence belongs to the universal ribosomal protein uS19 family.

Functionally, protein S19 forms a complex with S13 that binds strongly to the 16S ribosomal RNA. This Saccharolobus solfataricus (strain ATCC 35092 / DSM 1617 / JCM 11322 / P2) (Sulfolobus solfataricus) protein is Small ribosomal subunit protein uS19 (rps19).